Consider the following 139-residue polypeptide: Small ribosomal subunit protein uS12 (139 aa).

The interval 12 to 55 is disordered; that stretch reads RVDKVKKSDSPALNKGYNSFKKSQTDVSSPQKRGVCTRVGTMTP. Polar residues predominate over residues 27–42; the sequence is GYNSFKKSQTDVSSPQ. At aspartate 102 the chain carries 3-methylthioaspartic acid. The interval 119–139 is disordered; sequence GVQNRMQGRSKYGTKKPKDKK. Positions 130-139 are enriched in basic residues; the sequence is YGTKKPKDKK.

The protein belongs to the universal ribosomal protein uS12 family. As to quaternary structure, part of the 30S ribosomal subunit. Contacts proteins S8 and S17. May interact with IF1 in the 30S initiation complex.

With S4 and S5 plays an important role in translational accuracy. Its function is as follows. Interacts with and stabilizes bases of the 16S rRNA that are involved in tRNA selection in the A site and with the mRNA backbone. Located at the interface of the 30S and 50S subunits, it traverses the body of the 30S subunit contacting proteins on the other side and probably holding the rRNA structure together. The combined cluster of proteins S8, S12 and S17 appears to hold together the shoulder and platform of the 30S subunit. In Shouchella clausii (strain KSM-K16) (Alkalihalobacillus clausii), this protein is Small ribosomal subunit protein uS12.